A 360-amino-acid chain; its full sequence is Peptide chain release factor 1 (360 aa).

Residue Gln-235 is modified to N5-methylglutamine. Residues 285 to 305 (KRQEAEASERRNLLGSGDRSD) form a disordered region.

The protein belongs to the prokaryotic/mitochondrial release factor family. Post-translationally, methylated by PrmC. Methylation increases the termination efficiency of RF1.

Its subcellular location is the cytoplasm. In terms of biological role, peptide chain release factor 1 directs the termination of translation in response to the peptide chain termination codons UAG and UAA. This is Peptide chain release factor 1 from Proteus mirabilis (strain HI4320).